Here is a 209-residue protein sequence, read N- to C-terminus: Uracil phosphoribosyltransferase (209 aa).

5-phospho-alpha-D-ribose 1-diphosphate-binding positions include R79, R104, and 131 to 139 (DPMLATGGS). Uracil contacts are provided by residues I194 and 199–201 (GDA). D200 lines the 5-phospho-alpha-D-ribose 1-diphosphate pocket.

Belongs to the UPRTase family. The cofactor is Mg(2+).

It carries out the reaction UMP + diphosphate = 5-phospho-alpha-D-ribose 1-diphosphate + uracil. The protein operates within pyrimidine metabolism; UMP biosynthesis via salvage pathway; UMP from uracil: step 1/1. Allosterically activated by GTP. Catalyzes the conversion of uracil and 5-phospho-alpha-D-ribose 1-diphosphate (PRPP) to UMP and diphosphate. The protein is Uracil phosphoribosyltransferase of Symbiobacterium thermophilum (strain DSM 24528 / JCM 14929 / IAM 14863 / T).